The chain runs to 362 residues: Chemerin-like receptor 1 (362 aa).

At 1-37 (MEAEDYNASYEDYPDDVDPIVVLEELSPLEGRVVRIL) the chain is on the extracellular side. Asn-7 is a glycosylation site (N-linked (GlcNAc...) asparagine). A helical transmembrane segment spans residues 38-58 (LVAVYSVICLLGILGNGLVIV). At 59–70 (MITCKMKRTVNT) the chain is on the cytoplasmic side. A helical membrane pass occupies residues 71–91 (VWFLNLAVADFLFNVFLPVHI). Over 92–108 (AYAALDYHWVFGTAMCK) the chain is Extracellular. Cys-107 and Cys-184 are joined by a disulfide. Residues 109–129 (ISNFLLIHNMFTSVFLLTVIS) traverse the membrane as a helical segment. At 130 to 151 (FDRCVSVLLPVWSQNHRSVRLA) the chain is on the cytoplasmic side. Residues 152–172 (YTACLVIWVLAFFLSSPSLVF) form a helical membrane-spanning segment. Over 173–219 (RDTARLHGKISCFNNFSLSAAVSSPWPAHPQVDPVGSGRHKVVTITR) the chain is Extracellular. Asn-187 carries an N-linked (GlcNAc...) asparagine glycan. Residues 220 to 240 (FLCGFLVPGLITTACYLTIVY) form a helical membrane-spanning segment. At 241–255 (KLQRSRLAKTKKPFK) the chain is on the cytoplasmic side. Residues 256 to 276 (IILTIIVTFFLCWCPYHAFYL) traverse the membrane as a helical segment. Over 277 to 281 (LELRR) the chain is Extracellular. A helical membrane pass occupies residues 282 to 302 (GSVPPSVFSLGVPLATAIAIA). Residues 303-362 (NSCMNPILYVFMGQDFKKFRVALFSRLVNALSEDTGHSSYPSHRSFTKMSSMNERETGML) lie on the Cytoplasmic side of the membrane. Ser-334 bears the Phosphoserine mark. The segment at 336-362 (DTGHSSYPSHRSFTKMSSMNERETGML) is disordered. A Phosphothreonine modification is found at Thr-337. The segment covering 339–354 (HSSYPSHRSFTKMSSM) has biased composition (polar residues). 3 positions are modified to phosphoserine: Ser-344, Ser-347, and Ser-353.

Belongs to the chemokine-like receptor (CMKLR) family. As to expression, widely expressed in several tissues including adipose, muscle, liver and brain.

The protein resides in the cell membrane. In terms of biological role, receptor for the chemoattractant adipokine chemerin/RARRES2 and for the omega-3 fatty acid derived molecule resolvin E1. Interaction with RARRES2 initiates activation of G proteins G(i)/G(o) and beta-arrestin pathways inducing cellular responses via second messenger pathways such as intracellular calcium mobilization, phosphorylation of MAP kinases MAPK1/MAPK3 (ERK1/2), TYRO3, MAPK14/P38MAPK and PI3K leading to multifunctional effects, like, reduction of immune responses, enhancing of adipogenesis and angionesis. Resolvin E1 down-regulates cytokine production in macrophages by reducing the activation of MAPK1/3 (ERK1/2) and NF-kappa-B. Positively regulates adipogenesis and adipocyte metabolism. This is Chemerin-like receptor 1 (CMLKR1) from Bos taurus (Bovine).